Reading from the N-terminus, the 359-residue chain is UDP-2-acetamido-2-deoxy-3-oxo-D-glucuronate aminotransferase (359 aa).

Positions 29, 31, and 184 each coordinate UDP-2-acetamido-2-deoxy-alpha-D-ribo-hex-3-uluronate. Lys-185 carries the N6-(pyridoxal phosphate)lysine modification. Residues Arg-229, His-308, and Tyr-309 each contribute to the UDP-2-acetamido-2-deoxy-alpha-D-ribo-hex-3-uluronate site.

Belongs to the DegT/DnrJ/EryC1 family. As to quaternary structure, homodimer. Pyridoxal 5'-phosphate serves as cofactor.

The catalysed reaction is UDP-2-acetamido-2-deoxy-alpha-D-ribo-hex-3-uluronate + L-glutamate = UDP-2-acetamido-3-amino-2,3-dideoxy-alpha-D-glucuronate + 2-oxoglutarate. It participates in bacterial outer membrane biogenesis; LPS O-antigen biosynthesis. In terms of biological role, plays a role in the biosynthesis of B-band O antigen for serotype O5. Catalyzes the amination of UDP-2-acetamido-2-deoxy-3-oxo-D-glucuronic acid (UDP-3-oxo-D-GlcNAcA) to UDP-2-acetamido-3-amino-2,3-dideoxy-D-glucuronic acid (UDP-GlcNAc3NA), using L-glutamate as the preferred amine donor. This is UDP-2-acetamido-2-deoxy-3-oxo-D-glucuronate aminotransferase from Pseudomonas aeruginosa (strain ATCC 15692 / DSM 22644 / CIP 104116 / JCM 14847 / LMG 12228 / 1C / PRS 101 / PAO1).